The primary structure comprises 339 residues: DNA-directed RNA polymerase subunit alpha (339 aa).

Residues 1–233 (MVREEVAGST…DLFLPFLHAE (233 aa)) are alpha N-terminal domain (alpha-NTD). An alpha C-terminal domain (alpha-CTD) region spans residues 264 to 339 (KKGIPLNCIF…IDLLKNKLSF (76 aa)).

This sequence belongs to the RNA polymerase alpha chain family. As to quaternary structure, in plastids the minimal PEP RNA polymerase catalytic core is composed of four subunits: alpha, beta, beta', and beta''. When a (nuclear-encoded) sigma factor is associated with the core the holoenzyme is formed, which can initiate transcription.

It is found in the plastid. The protein resides in the chloroplast. It catalyses the reaction RNA(n) + a ribonucleoside 5'-triphosphate = RNA(n+1) + diphosphate. DNA-dependent RNA polymerase catalyzes the transcription of DNA into RNA using the four ribonucleoside triphosphates as substrates. This is DNA-directed RNA polymerase subunit alpha from Thinopyrum elongatum (Tall wheatgrass).